A 1470-amino-acid chain; its full sequence is Guanine nucleotide exchange factor subunit R06F6.8 (1470 aa).

WD repeat units follow at residues 20 to 58, 68 to 107, and 472 to 512; these read STAA…LLCS, ETRG…DEQC, and AYCS…VVGV. Disordered stretches follow at residues 673–710, 975–1001, 1017–1045, and 1238–1259; these read QSQN…PMNQ, FFRT…ADSS, RLNK…SKDK, and RSPS…SPSS. Residues 689–707 show a composition bias toward low complexity; sequence SNVSIQSVSTSTTSEPSSP. Positions 983 to 1001 are enriched in polar residues; that stretch reads AKTSLSRRPTVSSPSADSS. Residues 1028-1045 are compositionally biased toward basic and acidic residues; the sequence is EQKDAPRKDSIGGSSKDK. A helical membrane pass occupies residues 1294-1314; sequence LLLSLFSQTATIDWIFLFCLL. The segment covering 1385–1403 has biased composition (basic and acidic residues); sequence SPDNENRKASQKTSADDPK. Residues 1385–1447 are disordered; that stretch reads SPDNENRKAS…SADRAHKSVK (63 aa). The segment covering 1411 to 1424 has biased composition (polar residues); it reads SGSSKLNNSFSNPK. Basic and acidic residues predominate over residues 1431–1447; sequence GRRERSRSADRAHKSVK.

Belongs to the RIC1 family. As to quaternary structure, component of a guanine nucleotide exchange factor (GEF) complex.

Its subcellular location is the membrane. Functionally, probable component of a guanine nucleotide exchange factor (GEF) that may be required for efficient fusion of endosome-derived vesicles with the Golgi. The sequence is that of Guanine nucleotide exchange factor subunit R06F6.8 from Caenorhabditis elegans.